We begin with the raw amino-acid sequence, 464 residues long: Glutamate--tRNA ligase (464 aa).

Positions 11–21 match the 'HIGH' region motif; sequence PSPTGFIHLGN. Positions 243–247 match the 'KMSKS' region motif; sequence KMSKR. Position 246 (lysine 246) interacts with ATP.

It belongs to the class-I aminoacyl-tRNA synthetase family. Glutamate--tRNA ligase type 1 subfamily. As to quaternary structure, monomer.

The protein resides in the cytoplasm. It carries out the reaction tRNA(Glu) + L-glutamate + ATP = L-glutamyl-tRNA(Glu) + AMP + diphosphate. Catalyzes the attachment of glutamate to tRNA(Glu) in a two-step reaction: glutamate is first activated by ATP to form Glu-AMP and then transferred to the acceptor end of tRNA(Glu). The sequence is that of Glutamate--tRNA ligase from Polaromonas naphthalenivorans (strain CJ2).